The sequence spans 327 residues: Phenylalanine--tRNA ligase alpha subunit (327 aa).

Residue Glu252 participates in Mg(2+) binding.

The protein belongs to the class-II aminoacyl-tRNA synthetase family. Phe-tRNA synthetase alpha subunit type 1 subfamily. Tetramer of two alpha and two beta subunits. The cofactor is Mg(2+).

Its subcellular location is the cytoplasm. The enzyme catalyses tRNA(Phe) + L-phenylalanine + ATP = L-phenylalanyl-tRNA(Phe) + AMP + diphosphate + H(+). In Shewanella denitrificans (strain OS217 / ATCC BAA-1090 / DSM 15013), this protein is Phenylalanine--tRNA ligase alpha subunit.